The following is a 56-amino-acid chain: Frontoxin I (56 aa).

4 disulfides stabilise this stretch: cysteine 3–cysteine 22, cysteine 17–cysteine 39, cysteine 41–cysteine 52, and cysteine 53–cysteine 56.

Belongs to the three-finger toxin family. Short-chain subfamily. Type I alpha-neurotoxin sub-subfamily. As to expression, expressed by the venom gland.

Its subcellular location is the secreted. Functionally, binds to muscle nicotinic acetylcholine receptor (nAChR) and inhibit acetylcholine from binding to the receptor, thereby impairing neuromuscular transmission. The polypeptide is Frontoxin I (Micrurus frontalis (Coral snake)).